The primary structure comprises 653 residues: Fructose-1,6-bisphosphatase class 3 (653 aa).

Belongs to the FBPase class 3 family. Mn(2+) is required as a cofactor.

The enzyme catalyses beta-D-fructose 1,6-bisphosphate + H2O = beta-D-fructose 6-phosphate + phosphate. It functions in the pathway carbohydrate biosynthesis; gluconeogenesis. This chain is Fructose-1,6-bisphosphatase class 3, found in Listeria monocytogenes serovar 1/2a (strain ATCC BAA-679 / EGD-e).